Consider the following 1184-residue polypeptide: Calcium-activated potassium channel subunit alpha-1a (1184 aa).

Over 1–39 (MSNNINFNKNPDSSVSISKMDVIIPFTPDVPCDNNGQRM) the chain is Extracellular. Residues 40-60 (WWAFLASSMVTFFGGLFIILL) traverse the membrane as a helical segment. The Cytoplasmic portion of the chain corresponds to 61–132 (WRTLKYLWTV…MISAQTLTGR (72 aa)). 3 S-palmitoyl cysteine lipidation sites follow: Cys-71, Cys-72, and Cys-74. The helical transmembrane segment at 133 to 153 (VLVVLVFALSIGALGIYFIDS) threads the bilayer. Residues 154-168 (SDPIESCQNFYKDFT) are Extracellular-facing. Residues 169–189 (LQIDMAFNVFFLLYFGLRFIA) traverse the membrane as a helical segment. The Cytoplasmic segment spans residues 190-193 (ANDK). The chain crosses the membrane as a helical span at residues 194 to 214 (LWFWLEVNSVVDFFTVPPVFV). The Extracellular segment spans residues 215–254 (SVYLNRSWLGLRFLRALRLIQFSEILQFLNILKTSNSIKL). The chain crosses the membrane as a helical span at residues 255 to 275 (VNLCSIFISTWLTAAGFIHLV). Residues 276–289 (ENSGDPWENFQNSQ) lie on the Cytoplasmic side of the membrane. A helical transmembrane segment spans residues 290 to 310 (PLSYWECVYLLMVTMSTVGYG). Residues 311-321 (DVYARTTLGRL) are Extracellular-facing. Residues 322–342 (FMVFFILGGLAMFASYVPEII) traverse the membrane as a helical segment. The Cytoplasmic portion of the chain corresponds to 343–1184 (ELIGNRKKYG…PPIREVEDEC (842 aa)). The region spanning 361–503 (RKHIVVCGHI…WNWKEGDDAI (143 aa)) is the RCK N-terminal 1 domain. Mg(2+)-binding residues include Glu-393, Gln-416, and Glu-418. Residue Asn-468 participates in Ca(2+) binding. The interval 655–677 (EHPSTLSPKKKQRNGGMRNSPNC) is disordered. Thr-659 is modified (phosphothreonine). Residues Ser-661, Ser-674, and Ser-678 each carry the phosphoserine modification. Positions 735-879 (SGHVVVCIFG…MDRSSPDNSP (145 aa)) constitute an RCK N-terminal 2 domain. At Thr-866 the chain carries Phosphothreonine. A phosphoserine mark is found at Ser-874 and Ser-878. Ca(2+) contacts are provided by Gln-908, Asp-911, Asp-914, and Asp-916. The short motif at 908–916 (QFLDQDDDD) is the Calcium bowl element. The interval 1082–1143 (RASLSHSSHS…PEKRWFTDEA (62 aa)) is disordered. Low complexity predominate over residues 1084–1104 (SLSHSSHSSHSSSKKSSSVHS). The segment covering 1116 to 1125 (KAREARDKQN) has biased composition (basic and acidic residues).

Belongs to the potassium channel family. Calcium-activated (TC 1.A.1.3) subfamily. KCa1.1/KCNMA1 sub-subfamily. As to quaternary structure, homotetramer; which constitutes the calcium-activated potassium channel. Post-translationally, phosphorylated. Palmitoylated.

It localises to the cell membrane. It catalyses the reaction K(+)(in) = K(+)(out). Functionally, potassium channel activated by both membrane depolarization or increase in cytosolic Ca(2+) that mediates export of K(+). It is also activated by the concentration of cytosolic Mg(2+). Its activation dampens the excitatory events that elevate the cytosolic Ca(2+) concentration and/or depolarize the cell membrane. It therefore contributes to repolarization of the membrane potential. Involved in determining peripheral auditory sensitivity. The protein is Calcium-activated potassium channel subunit alpha-1a of Danio rerio (Zebrafish).